A 496-amino-acid chain; its full sequence is Probable malate:quinone oxidoreductase (496 aa).

The protein belongs to the MQO family. FAD is required as a cofactor.

The catalysed reaction is (S)-malate + a quinone = a quinol + oxaloacetate. The protein operates within carbohydrate metabolism; tricarboxylic acid cycle; oxaloacetate from (S)-malate (quinone route): step 1/1. The sequence is that of Probable malate:quinone oxidoreductase from Prochlorococcus marinus (strain NATL2A).